A 90-amino-acid polypeptide reads, in one-letter code: MENRRQGMVVYLHSLKQSKMLRKFGNVHYVSKRLKYVVLYCDMDQIEKTMDKIASYSFVKKVEPSYKPFLKLEFESKLDKAKEYDYKIGI.

Belongs to the UPF0298 family.

The protein resides in the cytoplasm. The protein is UPF0298 protein YlbG (ylbG) of Bacillus subtilis (strain 168).